We begin with the raw amino-acid sequence, 312 residues long: Dipeptide transport ATP-binding protein DppF (312 aa).

In terms of domain architecture, ABC transporter spans 10 to 255 (IKNLDLTFNK…PIHPYTKSLL (246 aa)). 45-52 (GESGSGKT) lines the ATP pocket.

This sequence belongs to the ABC transporter superfamily. The complex is composed of two ATP-binding proteins (DppD and DppF), two transmembrane proteins (DppB and DppC) and a solute-binding protein (DppA).

Its subcellular location is the cell membrane. It catalyses the reaction a dipeptide(out) + ATP + H2O = a dipeptide(in) + ADP + phosphate + H(+). Its function is as follows. Part of the ABC transporter DppABCDF involved in dipeptide transport. Responsible for energy coupling to the transport system. This Lactococcus lactis subsp. cremoris (strain MG1363) protein is Dipeptide transport ATP-binding protein DppF.